The primary structure comprises 395 residues: THP3 homolog C2A9.11c (395 aa).

The segment at 91-127 (LLSEEDEVDKKEKRRRRFENGSRSQNNAKSEELKVNP) is disordered. In terms of domain architecture, PCI spans 218–384 (DVGEYNQCQT…STDRFEKCMK (167 aa)).

This sequence belongs to the THP3 family.

It is found in the cytoplasm. The protein resides in the nucleus. Its function is as follows. Required for transcription elongation. May also be involved in pre-mRNA splicing. The protein is THP3 homolog C2A9.11c of Schizosaccharomyces pombe (strain 972 / ATCC 24843) (Fission yeast).